A 778-amino-acid chain; its full sequence is Probable dipeptidyl peptidase 4 (778 aa).

The N-terminal stretch at Met1–Ala18 is a signal peptide. N-linked (GlcNAc...) asparagine glycosylation is found at Asn84, Asn114, and Asn222. Residues Ser616, Asp693, and His728 each act as charge relay system in the active site.

This sequence belongs to the peptidase S9B family.

It localises to the secreted. The catalysed reaction is Release of an N-terminal dipeptide, Xaa-Yaa-|-Zaa-, from a polypeptide, preferentially when Yaa is Pro, provided Zaa is neither Pro nor hydroxyproline.. Its function is as follows. Extracellular dipeptidyl-peptidase which removes N-terminal dipeptides sequentially from polypeptides having unsubstituted N-termini provided that the penultimate residue is proline. Contributes to pathogenicity. This chain is Probable dipeptidyl peptidase 4 (DPP4), found in Arthroderma benhamiae (strain ATCC MYA-4681 / CBS 112371) (Trichophyton mentagrophytes).